Consider the following 182-residue polypeptide: Transcription termination/antitermination protein NusG (182 aa).

The region spanning 131 to 163 (VGEQVRIKSGPFANQVGEVQEIETDKFKLTVLV) is the KOW domain.

The protein belongs to the NusG family.

Participates in transcription elongation, termination and antitermination. In Staphylococcus aureus (strain NCTC 8325 / PS 47), this protein is Transcription termination/antitermination protein NusG.